The following is a 1104-amino-acid chain: A disintegrin and metalloproteinase with thrombospondin motifs 10 (1104 aa).

The N-terminal stretch at Met1–Ala25 is a signal peptide. The propeptide occupies Phe26–Arg233. Residues Asn90 and Asn222 are each glycosylated (N-linked (GlcNAc...) asparagine). The region spanning Arg239 to Pro457 is the Peptidase M12B domain. 11 disulfides stabilise this stretch: Cys315–Cys376, Cys351–Cys358, Cys370–Cys452, Cys409–Cys436, Cys479–Cys501, Cys490–Cys508, Cys496–Cys531, Cys521–Cys536, Cys559–Cys596, Cys563–Cys601, and Cys574–Cys586. His392 provides a ligand contact to Zn(2+). Residue Glu393 is part of the active site. Zn(2+) contacts are provided by His396 and His402. In terms of domain architecture, Disintegrin spans Gln460–Val546. Residues Asp547–Pro602 enclose the TSP type-1 1 domain. The tract at residues Glu706–Pro818 is spacer. N-linked (GlcNAc...) asparagine glycans are attached at residues Asn740 and Asn795. 4 TSP type-1 domains span residues Pro825 to Pro885, Trp888 to Met943, Cys944 to Pro1003, and Pro1004 to Asp1058. 3 disulfides stabilise this stretch: Cys837–Cys879, Cys841–Cys884, and Cys852–Cys866. The N-linked (GlcNAc...) asparagine glycan is linked to Asn892. A PLAC domain is found at Gly1066 to Arg1104.

As to quaternary structure, interacts with FBN1; this interaction promotes microfibrils assembly. It depends on Zn(2+) as a cofactor. In terms of processing, glycosylated. Can be O-fucosylated by POFUT2 on a serine or a threonine residue found within the consensus sequence C1-X(2)-(S/T)-C2-G of the TSP type-1 repeat domains where C1 and C2 are the first and second cysteine residue of the repeat, respectively. Fucosylated repeats can then be further glycosylated by the addition of a beta-1,3-glucose residue by the glucosyltransferase, B3GALTL. Fucosylation mediates the efficient secretion of ADAMTS family members. Can also be C-glycosylated with one or two mannose molecules on tryptophan residues within the consensus sequence W-X-X-W of the TPRs, and N-glycosylated. These other glycosylations can also facilitate secretion. Widely expressed in adult tissues.

It is found in the secreted. Its subcellular location is the extracellular space. The protein resides in the extracellular matrix. In terms of biological role, metalloprotease that participate in microfibrils assembly. Microfibrils are extracellular matrix components occurring independently or along with elastin in the formation of elastic tissues. The sequence is that of A disintegrin and metalloproteinase with thrombospondin motifs 10 (Adamts10) from Mus musculus (Mouse).